A 36-amino-acid polypeptide reads, in one-letter code: Photosystem I reaction center subunit VIII (36 aa).

Residues 8-28 (AILVPIVGLVFPALSMALFFI) form a helical membrane-spanning segment.

Belongs to the PsaI family.

Its subcellular location is the plastid. It localises to the chloroplast thylakoid membrane. In terms of biological role, may help in the organization of the PsaL subunit. This is Photosystem I reaction center subunit VIII from Phaeodactylum tricornutum (strain CCAP 1055/1).